A 308-amino-acid chain; its full sequence is Olfactory receptor 5K1 (308 aa).

The Extracellular segment spans residues Met1–Thr25. Residue Asn5 is glycosylated (N-linked (GlcNAc...) asparagine). The chain crosses the membrane as a helical span at residues Leu26–Val46. Residues Ala47–Arg54 lie on the Cytoplasmic side of the membrane. A helical transmembrane segment spans residues Leu55–Cys75. At Ala76 to Val99 the chain is on the extracellular side. A disulfide bridge links Cys97 with Cys189. The helical transmembrane segment at Gln100–Tyr120 threads the bilayer. At Asp121–Lys139 the chain is on the cytoplasmic side. The helical transmembrane segment at Leu140–Val160 threads the bilayer. Topologically, residues Gly161–Glu196 are extracellular. The helical transmembrane segment at Leu197 to Ser217 threads the bilayer. The Cytoplasmic portion of the chain corresponds to Tyr218–Ala237. A helical transmembrane segment spans residues Phe238–Met258. The Extracellular portion of the chain corresponds to Tyr259 to Asp271. The helical transmembrane segment at Ile272 to Leu292 threads the bilayer. The Cytoplasmic portion of the chain corresponds to Arg293–Lys308.

Belongs to the G-protein coupled receptor 1 family.

Its subcellular location is the cell membrane. Its function is as follows. Odorant receptor. In Homo sapiens (Human), this protein is Olfactory receptor 5K1 (OR5K1).